The primary structure comprises 650 residues: MAIQVLPPQLANQIAAGEVVERPASVIKELVENSLDAGATRVDIDIDKGGSKLIRIRDNGGGIPKAELALALARHATSKVQTLEDLEAILSFGFRGEALASISSVSRLTLTSRTTEQAEAWQAYAEGSEVAIRVMPAAHPVGTTIEVADLFFNTPARRRFLKSDKTEFTHIDEWLKRIALIRSDVHFSLSHNGKPVRQYRCAATDTQYLQRLAQVAGRAFADSAIKVDCQHDGMGLSGYLQSPALSDMVDCHYFYVNGRLIRDRLVNHAVRQAFGELGTFEQPAFVLSLTLDPHQVDVNVHPAKHEVRFHQARYVHDFILQVLQSALSQMQDLPLAEELPRAQESPASVREHTAGYAPYTFNRDAATEAAGVLSSLPDTQRSQRQPEKAASGQRSSVDAGLSQGSSAHRASQTGLGQSGNAATFETSERHGSGYSGAGQGQRYVRDQLSGQQRQAAQYYAELLHTPEVVSTSGSLQAGLPMPPLLAGRYWVLAQDEHLRLLSISDAAKALVVQEILSKLPTGLVGQPLLMPVAVAADADWTMILAERESLLRRLGLELTIRYQQLIIKKVPPYLRDSQLAKLIPEFLEWIKLEVPADEALCHWLAQYVTGFDAAPKVWQRIQSLEATERNKILESARDLPWQTWLDEYKH.

The disordered stretch occupies residues 374–420 (SSLPDTQRSQRQPEKAASGQRSSVDAGLSQGSSAHRASQTGLGQSGN). Polar residues predominate over residues 392-420 (GQRSSVDAGLSQGSSAHRASQTGLGQSGN).

It belongs to the DNA mismatch repair MutL/HexB family.

In terms of biological role, this protein is involved in the repair of mismatches in DNA. It is required for dam-dependent methyl-directed DNA mismatch repair. May act as a 'molecular matchmaker', a protein that promotes the formation of a stable complex between two or more DNA-binding proteins in an ATP-dependent manner without itself being part of a final effector complex. This Shewanella amazonensis (strain ATCC BAA-1098 / SB2B) protein is DNA mismatch repair protein MutL.